Consider the following 294-residue polypeptide: Nucleotide-binding protein NT01CX_1284 (294 aa).

ATP is bound at residue 8–15 (GLSGAGKS). 59–62 (DIRG) lines the GTP pocket.

The protein belongs to the RapZ-like family.

Displays ATPase and GTPase activities. The sequence is that of Nucleotide-binding protein NT01CX_1284 from Clostridium novyi (strain NT).